A 412-amino-acid polypeptide reads, in one-letter code: Multifunctional CCA protein (412 aa).

Gly8 and Arg11 together coordinate ATP. Residues Gly8 and Arg11 each contribute to the CTP site. Residues Asp21 and Asp23 each contribute to the Mg(2+) site. ATP-binding residues include Arg91, Arg137, and Arg140. 3 residues coordinate CTP: Arg91, Arg137, and Arg140. The region spanning 226–327 is the HD domain; it reads TGEHVLMVVE…VKVLERCDAL (102 aa).

Belongs to the tRNA nucleotidyltransferase/poly(A) polymerase family. Bacterial CCA-adding enzyme type 1 subfamily. In terms of assembly, monomer. Can also form homodimers and oligomers. It depends on Mg(2+) as a cofactor. The cofactor is Ni(2+).

It carries out the reaction a tRNA precursor + 2 CTP + ATP = a tRNA with a 3' CCA end + 3 diphosphate. It catalyses the reaction a tRNA with a 3' CCA end + 2 CTP + ATP = a tRNA with a 3' CCACCA end + 3 diphosphate. Functionally, catalyzes the addition and repair of the essential 3'-terminal CCA sequence in tRNAs without using a nucleic acid template. Adds these three nucleotides in the order of C, C, and A to the tRNA nucleotide-73, using CTP and ATP as substrates and producing inorganic pyrophosphate. tRNA 3'-terminal CCA addition is required both for tRNA processing and repair. Also involved in tRNA surveillance by mediating tandem CCA addition to generate a CCACCA at the 3' terminus of unstable tRNAs. While stable tRNAs receive only 3'-terminal CCA, unstable tRNAs are marked with CCACCA and rapidly degraded. This is Multifunctional CCA protein from Azoarcus sp. (strain BH72).